The chain runs to 435 residues: Enolase (435 aa).

2 residues coordinate substrate: His155 and Glu164. The active-site Proton donor is Glu205. The Mg(2+) site is built by Asp243, Glu292, and Asp319. Substrate-binding positions include Glu292, Asp319, Lys344, 371–374 (SHRS), and Lys395. Residue Lys344 is the Proton acceptor of the active site.

Belongs to the enolase family. In terms of assembly, homooctamer. Requires Mg(2+) as cofactor.

It localises to the cytoplasm. The protein localises to the secreted. Its subcellular location is the cell surface. The catalysed reaction is (2R)-2-phosphoglycerate = phosphoenolpyruvate + H2O. The protein operates within carbohydrate degradation; glycolysis; pyruvate from D-glyceraldehyde 3-phosphate: step 4/5. Catalyzes the reversible conversion of 2-phosphoglycerate (2-PG) into phosphoenolpyruvate (PEP). It is essential for the degradation of carbohydrates via glycolysis. In terms of biological role, 'Moonlights' as a plasminogen receptor and plasmin activator. Binds host (human) plasminogen in vitro; enhances the activity of host tissue-specific plasminogen activator (tPA). This is Enolase from Streptococcus pyogenes serotype M1.